The following is a 370-amino-acid chain: Pituitary-specific positive transcription factor 1 (370 aa).

Residues A5–V13 carry the 9aaTAD motif. A POU-specific domain is found at M202–E276. The segment at residues K292–K351 is a DNA-binding region (homeobox).

It belongs to the POU transcription factor family. Class-1 subfamily. As to expression, pituitary gland.

It localises to the nucleus. Transcription factor that activates growth hormone and prolactin genes. Specifically binds to the consensus sequence 5'-TAAAT-3'. The protein is Pituitary-specific positive transcription factor 1 (POU1F1) of Meleagris gallopavo (Wild turkey).